Reading from the N-terminus, the 243-residue chain is MKAVYIIGTDTDVGKTLICAGLCWALKEKGYNIGYFKPVLSGAKRRGKMLIPQDTEFVVNFAKIKGDIYRLTPFIFEKPASPHIAASDENVDINVNQIKQTFEDLSQNYEFVIIEGCGGLAVPLKEERNQFYMQYQLIKEICNNVILVTTTKLGTINHTLLTVEFAKAYGLCLKGIIVNMYKNEPDEDKVINTITKFTNIPILAKVDFINDFPSDVDENKFKNVFKKCFDDRAIRKIMGVFEC.

Aspartate 12–leucine 17 is a binding site for ATP. Mg(2+) is bound at residue threonine 16. Lysine 37 is an active-site residue. Serine 41 contacts substrate. Residues aspartate 54, glutamate 115–glycine 118, and asparagine 179–methionine 180 contribute to the ATP site. The Mg(2+) site is built by aspartate 54 and glutamate 115.

It belongs to the dethiobiotin synthetase family. As to quaternary structure, homodimer. Mg(2+) is required as a cofactor.

The protein resides in the cytoplasm. The enzyme catalyses (7R,8S)-7,8-diammoniononanoate + CO2 + ATP = (4R,5S)-dethiobiotin + ADP + phosphate + 3 H(+). The protein operates within cofactor biosynthesis; biotin biosynthesis; biotin from 7,8-diaminononanoate: step 1/2. Catalyzes a mechanistically unusual reaction, the ATP-dependent insertion of CO2 between the N7 and N8 nitrogen atoms of 7,8-diaminopelargonic acid (DAPA, also called 7,8-diammoniononanoate) to form a ureido ring. The polypeptide is ATP-dependent dethiobiotin synthetase BioD (Caldicellulosiruptor saccharolyticus (strain ATCC 43494 / DSM 8903 / Tp8T 6331)).